The sequence spans 471 residues: Putative multidrug resistance protein MdtD (471 aa).

The next 13 membrane-spanning stretches (helical) occupy residues 12-32 (LWIV…VNTA), 49-69 (MVIV…GWLA), 77-97 (IFFT…QSST), 106-126 (VLQG…VMKI), 138-158 (FVTL…GLLV), 165-185 (WIFL…LWLM), 197-217 (FSGF…LDGY), 225-245 (AGLG…LWHA), 263-285 (FSLG…FMTP), 290-312 (IGLG…GSMG), 342-362 (LLFM…VMLF), 396-416 (MVMQ…LGAF), and 431-451 (IFFW…LVFA).

Belongs to the major facilitator superfamily. TCR/Tet family.

It localises to the cell inner membrane. The protein is Putative multidrug resistance protein MdtD of Cronobacter sakazakii (strain ATCC BAA-894) (Enterobacter sakazakii).